The primary structure comprises 259 residues: MMQKQNMIVVNQKEIAKNIYELVLQGTLVQQMNEPGQFVHIKVAEGIAPLLRRPISICNVDQEKNEFTMLYRAEGQGTKTLATRKQGEMIDVLGPLGHGFPVEEAEAGQTALLVGGGIGVPPLYELSQRLVAKGVRVIHILGFQTKDVVFYEEKFAELGDTYVATVDGTHGTKGFVTDVIDNYGIDFDILYSCGPLAMLRALEGRYKEKKAYISLEERMGCGIGACFACVCHLQEDPSGHSYKKVCSDGPVFPIGEVVL.

One can recognise an FAD-binding FR-type domain in the interval 2-102; it reads MQKQNMIVVN…LGPLGHGFPV (101 aa). Residues 53-56, 70-72, and 77-78 contribute to the FAD site; these read RPIS, LYR, and GT. [2Fe-2S] cluster contacts are provided by Cys-221, Cys-226, Cys-229, and Cys-246.

It belongs to the PyrK family. In terms of assembly, heterotetramer of 2 PyrK and 2 PyrD type B subunits. [2Fe-2S] cluster serves as cofactor. Requires FAD as cofactor.

Its pathway is pyrimidine metabolism; UMP biosynthesis via de novo pathway; orotate from (S)-dihydroorotate (NAD(+) route): step 1/1. Responsible for channeling the electrons from the oxidation of dihydroorotate from the FMN redox center in the PyrD type B subunit to the ultimate electron acceptor NAD(+). This chain is Dihydroorotate dehydrogenase B (NAD(+)), electron transfer subunit, found in Bacillus cereus (strain G9842).